The chain runs to 394 residues: Elongation factor Tu (394 aa).

A tr-type G domain is found at 10 to 205 (KPHVNIGTIG…VDTWIPLPPR (196 aa)). Residues 19–26 (GHVDHGKT) form a G1 region. A GTP-binding site is contributed by 19 to 26 (GHVDHGKT). Thr-26 is a Mg(2+) binding site. The segment at 60–64 (GITIN) is G2. Residues 81–84 (DCPG) are G3. GTP contacts are provided by residues 81–85 (DCPGH) and 136–139 (NKCD). Residues 136–139 (NKCD) form a G4 region. Residues 174–176 (SAL) are G5.

Belongs to the TRAFAC class translation factor GTPase superfamily. Classic translation factor GTPase family. EF-Tu/EF-1A subfamily. Monomer.

The protein resides in the cytoplasm. It carries out the reaction GTP + H2O = GDP + phosphate + H(+). Functionally, GTP hydrolase that promotes the GTP-dependent binding of aminoacyl-tRNA to the A-site of ribosomes during protein biosynthesis. This is Elongation factor Tu from Phocaeicola vulgatus (strain ATCC 8482 / DSM 1447 / JCM 5826 / CCUG 4940 / NBRC 14291 / NCTC 11154) (Bacteroides vulgatus).